A 330-amino-acid chain; its full sequence is ADP-L-glycero-D-manno-heptose-6-epimerase (330 aa).

Residues 11 to 12, 32 to 33, Lys39, Lys54, 75 to 79, and Asn92 contribute to the NADP(+) site; these read FI, DN, and EGACS. Tyr139 acts as the Proton acceptor in catalysis. Residue Lys143 coordinates NADP(+). Asn168 lines the substrate pocket. NADP(+) is bound by residues Val169 and Lys177. Lys177 (proton acceptor) is an active-site residue. Residues Arg179, His186, 200-203, Arg213, and Tyr292 each bind substrate; that span reads FGEY.

Belongs to the NAD(P)-dependent epimerase/dehydratase family. HldD subfamily. Homopentamer. The cofactor is NADP(+).

It carries out the reaction ADP-D-glycero-beta-D-manno-heptose = ADP-L-glycero-beta-D-manno-heptose. It participates in nucleotide-sugar biosynthesis; ADP-L-glycero-beta-D-manno-heptose biosynthesis; ADP-L-glycero-beta-D-manno-heptose from D-glycero-beta-D-manno-heptose 7-phosphate: step 4/4. Catalyzes the interconversion between ADP-D-glycero-beta-D-manno-heptose and ADP-L-glycero-beta-D-manno-heptose via an epimerization at carbon 6 of the heptose. This is ADP-L-glycero-D-manno-heptose-6-epimerase from Burkholderia pseudomallei (strain K96243).